The sequence spans 352 residues: UDP-N-acetylglucosamine--N-acetylmuramyl-(pentapeptide) pyrophosphoryl-undecaprenol N-acetylglucosamine transferase (352 aa).

Residues serine 195 and glutamine 287 each coordinate UDP-N-acetyl-alpha-D-glucosamine.

It belongs to the glycosyltransferase 28 family. MurG subfamily.

Its subcellular location is the cell membrane. The enzyme catalyses Mur2Ac(oyl-L-Ala-gamma-D-Glu-L-Lys-D-Ala-D-Ala)-di-trans,octa-cis-undecaprenyl diphosphate + UDP-N-acetyl-alpha-D-glucosamine = beta-D-GlcNAc-(1-&gt;4)-Mur2Ac(oyl-L-Ala-gamma-D-Glu-L-Lys-D-Ala-D-Ala)-di-trans,octa-cis-undecaprenyl diphosphate + UDP + H(+). The protein operates within cell wall biogenesis; peptidoglycan biosynthesis. In terms of biological role, cell wall formation. Catalyzes the transfer of a GlcNAc subunit on undecaprenyl-pyrophosphoryl-MurNAc-pentapeptide (lipid intermediate I) to form undecaprenyl-pyrophosphoryl-MurNAc-(pentapeptide)GlcNAc (lipid intermediate II). The chain is UDP-N-acetylglucosamine--N-acetylmuramyl-(pentapeptide) pyrophosphoryl-undecaprenol N-acetylglucosamine transferase from Streptococcus pneumoniae (strain Taiwan19F-14).